A 245-amino-acid polypeptide reads, in one-letter code: tRNA pseudouridine synthase A (245 aa).

The Nucleophile role is filled by D52. Y110 is a substrate binding site.

This sequence belongs to the tRNA pseudouridine synthase TruA family. As to quaternary structure, homodimer.

The enzyme catalyses uridine(38/39/40) in tRNA = pseudouridine(38/39/40) in tRNA. Functionally, formation of pseudouridine at positions 38, 39 and 40 in the anticodon stem and loop of transfer RNAs. The sequence is that of tRNA pseudouridine synthase A from Borrelia duttonii (strain Ly).